The chain runs to 290 residues: Large ribosomal subunit protein uL3 (290 aa).

Gln152 is modified (N5-methylglutamine). Residues 250–290 (ARLAEEQAAAEAESLAQAEAEIAAEGSDAAPEGDADKKDGE) are disordered. Residues 255-274 (EQAAAEAESLAQAEAEIAAE) are compositionally biased toward low complexity.

The protein belongs to the universal ribosomal protein uL3 family. Part of the 50S ribosomal subunit. Forms a cluster with proteins L14 and L19. Methylated by PrmB.

One of the primary rRNA binding proteins, it binds directly near the 3'-end of the 23S rRNA, where it nucleates assembly of the 50S subunit. This Jannaschia sp. (strain CCS1) protein is Large ribosomal subunit protein uL3.